We begin with the raw amino-acid sequence, 620 residues long: mRNA cap guanine-N(7) methyltransferase (620 aa).

Disordered regions lie at residues 1-176 and 193-304; these read MLPP…APSS and AHAN…DDEY. A compositionally biased stretch (polar residues) spans 29–44; it reads RSPSMSLSPRSQNQSL. Composition is skewed to low complexity over residues 45–60 and 136–157; these read PYPS…SAHP and PQPT…TPHH. An mRNA cap 0 methyltransferase domain is found at 345–620; it reads SPIIGLKKFN…LYMGFAFEKM (276 aa). 354–355 serves as a coordination point for mRNA; it reads NN. Lys-358, Gly-377, Asp-399, Asp-428, Gln-454, and Tyr-459 together coordinate S-adenosyl-L-methionine.

This sequence belongs to the class I-like SAM-binding methyltransferase superfamily. mRNA cap 0 methyltransferase family.

The protein localises to the nucleus. The catalysed reaction is a 5'-end (5'-triphosphoguanosine)-ribonucleoside in mRNA + S-adenosyl-L-methionine = a 5'-end (N(7)-methyl 5'-triphosphoguanosine)-ribonucleoside in mRNA + S-adenosyl-L-homocysteine. Its function is as follows. Responsible for methylating the 5'-cap structure of mRNAs. The sequence is that of mRNA cap guanine-N(7) methyltransferase (ABD1) from Cryptococcus neoformans var. neoformans serotype D (strain JEC21 / ATCC MYA-565) (Filobasidiella neoformans).